A 261-amino-acid chain; its full sequence is Type III pantothenate kinase (261 aa).

6–13 (DVGNTNAK) contacts ATP. 108 to 111 (GADR) serves as a coordination point for substrate. The active-site Proton acceptor is the aspartate 110. Threonine 134 serves as a coordination point for ATP. Threonine 188 contributes to the substrate binding site.

This sequence belongs to the type III pantothenate kinase family. Homodimer. The cofactor is NH4(+). Requires K(+) as cofactor.

It localises to the cytoplasm. It catalyses the reaction (R)-pantothenate + ATP = (R)-4'-phosphopantothenate + ADP + H(+). The protein operates within cofactor biosynthesis; coenzyme A biosynthesis; CoA from (R)-pantothenate: step 1/5. Its function is as follows. Catalyzes the phosphorylation of pantothenate (Pan), the first step in CoA biosynthesis. This Sphingopyxis alaskensis (strain DSM 13593 / LMG 18877 / RB2256) (Sphingomonas alaskensis) protein is Type III pantothenate kinase.